The chain runs to 124 residues: Large ribosomal subunit protein uL14 (124 aa).

It belongs to the universal ribosomal protein uL14 family. Part of the 50S ribosomal subunit. Forms a cluster with proteins L3 and L19. In the 70S ribosome, L14 and L19 interact and together make contacts with the 16S rRNA in bridges B5 and B8.

Its function is as follows. Binds to 23S rRNA. Forms part of two intersubunit bridges in the 70S ribosome. The polypeptide is Large ribosomal subunit protein uL14 (Clostridium novyi (strain NT)).